The following is a 601-amino-acid chain: MAQASQCIRNFSIIAHIDHGKSTLADRLIEYTGALSKREMEAQVLDNMDLERERGITIKLQTVRLQYPAKDGQTYELNLIDTPGHVDFTYEVSRSLAACEGALLIVDAAQGIEAQTLANVYLALENNLEIIPVINKIDLPSAEPERVKQEIEDVIGLDASEAILASAKTGIGIEDILEAVVAKVPPPQGDDNTPLKALIFDSYFDAYKGAISYVRVMEGRVAKGTQIKMMSSGKVFDVTEVGMFTPALRIVDEIKAGQVGYIAASIKNVRDTQVGDTITDAENAALYPLPGYRKATPMVFCGLYPVDSSDYGRLKDALEKLHLNDSSLVFEPETSSALGFGYRCGFLGLLHMDVIQERLEREYDLNLITTAPSVVYKVNKTDGEVLSIDNPSNLPKVDEIETIEEPIVKANIMVPSDFVGAIMELNQEKRGNFLNMDYLSANRVTLHYELPLSEIVYDYFDQLKSRTKGYASLDYELAGYKAASLVKLDVLLNGELVDALSFIVHKEKSYARGRRLVEKLRGIIPRQMFEVPIQAVIGQKVVARETVKAMRKDVLAKCYGGDISRKRKLLEKQKEGKKRMKQVGSVEIPQDAFMAVLKIDD.

The region spanning Gln-6–Gln-188 is the tr-type G domain. GTP-binding positions include Asp-18–Thr-23 and Asn-135–Asp-138.

This sequence belongs to the TRAFAC class translation factor GTPase superfamily. Classic translation factor GTPase family. LepA subfamily.

It localises to the cell membrane. It catalyses the reaction GTP + H2O = GDP + phosphate + H(+). In terms of biological role, required for accurate and efficient protein synthesis under certain stress conditions. May act as a fidelity factor of the translation reaction, by catalyzing a one-codon backward translocation of tRNAs on improperly translocated ribosomes. Back-translocation proceeds from a post-translocation (POST) complex to a pre-translocation (PRE) complex, thus giving elongation factor G a second chance to translocate the tRNAs correctly. Binds to ribosomes in a GTP-dependent manner. The polypeptide is Elongation factor 4 (Desulfitobacterium hafniense (strain DSM 10664 / DCB-2)).